Here is a 289-residue protein sequence, read N- to C-terminus: Tachykinins (289 aa).

A signal peptide spans 1–24 (MRSQGGSFAVALLLLLLLTAAATA). Residues 25–49 (ADAEPDVESSVSTLPPGADAPRRMV) constitute a propeptide that is removed on maturation. Positions 28–80 (EPDVESSVSTLPPGADAPRRMVKRAPTSSFIGMRGKKEDEKDQRAADWMGPDP) are disordered. Residue arginine 61 is modified to Arginine amide. Over residues 62–72 (GKKEDEKDQRA) the composition is skewed to basic and acidic residues. Residue asparagine 95 is modified to Asparagine amide. Residue arginine 110 is modified to Arginine amide. A Valine amide modification is found at valine 155. The tract at residues 156 to 175 (GKRAPTGFTGMRGKRPMSGD) is disordered. Arginine amide is present on residues arginine 167, arginine 198, arginine 237, and arginine 281. Residues 285–289 (PALAE) constitute a propeptide that is removed on maturation.

This sequence belongs to the tachykinin family.

The protein localises to the secreted. Its function is as follows. Tachykinins are active peptides which excite neurons, evoke behavioral responses, are potent vasodilators and secretagogues, and contract (directly or indirectly) many smooth muscles. Stimulates gut muscle contractions. The protein is Tachykinins of Drosophila pseudoobscura pseudoobscura (Fruit fly).